The chain runs to 1035 residues: Cell-division control histidine kinase PdhS (1035 aa).

The segment at 1–613 (MSGSYPFIDI…HADGSEEPVD (613 aa)) is important for polar localization. The disordered stretch occupies residues 500–533 (QGLANTRAESETPVSETSSIEPVEPTPPVKTRSE). The tract at residues 614-1035 (AHLNAIAWRG…VFPPTRVLAD (422 aa)) is interaction with DivK. A PAS domain is found at 659 to 730 (HVEELKTILD…YLHGLSGNGV (72 aa)). The region spanning 802-1031 (RISHEIRTPL…VVEIVFPPTR (230 aa)) is the Histidine kinase domain. A Phosphohistidine; by autocatalysis modification is found at His-805.

As to quaternary structure, interacts with DivK.

Its subcellular location is the cytoplasm. The catalysed reaction is ATP + protein L-histidine = ADP + protein N-phospho-L-histidine.. Functions as a polar differentiation marker. Essential protein that, by localizing in the old pole of dividing cells, controls cell division and maturation, probably through control of DivK phosphorylation status and cellular distribution, which in turn regulates CtrA, a transcriptional regulator of the minB operon. The asymmetrical localization of this protein is probably required for cells to enter a new division cycle. The sequence is that of Cell-division control histidine kinase PdhS (pdhS) from Brucella abortus (strain S19).